A 629-amino-acid polypeptide reads, in one-letter code: tRNA uridine 5-carboxymethylaminomethyl modification enzyme MnmG (629 aa).

Residues 13 to 18 (GGGHAG), valine 125, and serine 180 each bind FAD. Position 273–287 (273–287 (GPRYCPSIEDKVMRF)) interacts with NAD(+). Glutamine 370 provides a ligand contact to FAD.

It belongs to the MnmG family. In terms of assembly, homodimer. Heterotetramer of two MnmE and two MnmG subunits. It depends on FAD as a cofactor.

The protein localises to the cytoplasm. In terms of biological role, NAD-binding protein involved in the addition of a carboxymethylaminomethyl (cmnm) group at the wobble position (U34) of certain tRNAs, forming tRNA-cmnm(5)s(2)U34. This is tRNA uridine 5-carboxymethylaminomethyl modification enzyme MnmG from Shigella flexneri serotype 5b (strain 8401).